Consider the following 387-residue polypeptide: Anhydro-N-acetylmuramic acid kinase (387 aa).

An ATP-binding site is contributed by 9 to 16; that stretch reads GTSADGVD.

The protein belongs to the anhydro-N-acetylmuramic acid kinase family.

It carries out the reaction 1,6-anhydro-N-acetyl-beta-muramate + ATP + H2O = N-acetyl-D-muramate 6-phosphate + ADP + H(+). Its pathway is amino-sugar metabolism; 1,6-anhydro-N-acetylmuramate degradation. It functions in the pathway cell wall biogenesis; peptidoglycan recycling. Its function is as follows. Catalyzes the specific phosphorylation of 1,6-anhydro-N-acetylmuramic acid (anhMurNAc) with the simultaneous cleavage of the 1,6-anhydro ring, generating MurNAc-6-P. Is required for the utilization of anhMurNAc either imported from the medium or derived from its own cell wall murein, and thus plays a role in cell wall recycling. The polypeptide is Anhydro-N-acetylmuramic acid kinase (Synechococcus sp. (strain WH7803)).